The following is a 490-amino-acid chain: Myocilin (490 aa).

An N-terminal signal peptide occupies residues 1 to 18 (MPATQLLLLACLVWGLGA). N-linked (GlcNAc...) asparagine glycosylation occurs at Asn43. The stretch at 52-169 (QAMSAIQDLQ…SQEVARLRRG (118 aa)) forms a coiled coil. Over residues 146-157 (REENEDLARRLD) the composition is skewed to basic and acidic residues. The segment at 146–188 (REENEDLARRLDSSSQEVARLRRGQCPQARGTPQDVPSGSREV) is disordered. In terms of domain architecture, Olfactomedin-like spans 230 to 489 (GCGELVWVGE…MVTYDLRLSE (260 aa)). Residues Cys231 and Cys419 are joined by a disulfide bond. Ca(2+) contacts are provided by Asp366, Asn414, Ala415, Val463, and Asp464. Residues 488–490 (SEM) carry the Microbody targeting signal motif.

As to quaternary structure, homodimer (via N-terminus). Can also form higher oligomers. Interacts with OLFM3, FN1, NRCAM, GLDN and NFASC. Interacts (via N-terminus) with MYL2. Interacts with SFRP1, FRZB, FZD7, FZD10, FZD1 and WIF1; regulates Wnt signaling. Interacts with SNTA1; regulates muscle hypertrophy. Interacts with ERBB2 and ERBB3; activates ERBB2-ERBB3 signaling pathway. Interacts with SNCG; affects its secretion and its aggregation. Post-translationally, palmitoylated. Undergoes a calcium-dependent proteolytic cleavage at Arg-212 by CAPN2 in the endoplasmic reticulum. The result is the production of two fragments, one of 35 kDa containing the C-terminal olfactomedin-like domain, and another of 20 kDa containing the N-terminal leucine zipper-like domain. In terms of processing, glycosylated. As to expression, expressed in optic nerve head, ciliary body and retina.

The protein resides in the secreted. The protein localises to the golgi apparatus. It localises to the cytoplasmic vesicle. Its subcellular location is the extracellular space. It is found in the extracellular matrix. The protein resides in the extracellular exosome. The protein localises to the mitochondrion. It localises to the mitochondrion intermembrane space. Its subcellular location is the mitochondrion inner membrane. It is found in the mitochondrion outer membrane. The protein resides in the rough endoplasmic reticulum. The protein localises to the cell projection. It localises to the cilium. Its subcellular location is the endoplasmic reticulum. Functionally, secreted glycoprotein regulating the activation of different signaling pathways in adjacent cells to control different processes including cell adhesion, cell-matrix adhesion, cytoskeleton organization and cell migration. Promotes substrate adhesion, spreading and formation of focal contacts. Negatively regulates cell-matrix adhesion and stress fiber assembly through Rho protein signal transduction. Modulates the organization of actin cytoskeleton by stimulating the formation of stress fibers through interactions with components of Wnt signaling pathways. Promotes cell migration through activation of PTK2 and the downstream phosphatidylinositol 3-kinase signaling. Plays a role in bone formation and promotes osteoblast differentiation in a dose-dependent manner through mitogen-activated protein kinase signaling. Mediates myelination in the peripheral nervous system through ERBB2/ERBB3 signaling. Plays a role as a regulator of muscle hypertrophy through the components of dystrophin-associated protein complex. Involved in positive regulation of mitochondrial depolarization. Plays a role in neurite outgrowth. May participate in the obstruction of fluid outflow in the trabecular meshwork. This chain is Myocilin (MYOC), found in Felis catus (Cat).